The chain runs to 158 residues: U4/U6.U5 small nuclear ribonucleoprotein 27 kDa protein (158 aa).

The segment at 1–102 (MGRSRSRSPE…AEDLEGKTEE (102 aa)) is disordered. Residues 13-59 (RERRRSRSASRERERRRRERSRSRERRRSRSRSPHRRRSRSPRRHRS) show a composition bias toward basic residues. Basic and acidic residues predominate over residues 66 to 101 (RLKDRRDDDKKEPKESKGGGSKERQLAAEDLEGKTE).

Belongs to the SNUT3 family. In terms of assembly, part of a tri-snRNP complex.

It is found in the nucleus. May play a role in mRNA splicing. The protein is U4/U6.U5 small nuclear ribonucleoprotein 27 kDa protein (snrnp27) of Xenopus laevis (African clawed frog).